The chain runs to 208 residues: MTHVVLIDNHDSFVYNLVDAFAVAGYKCTVFRNTVPVETILAANPDLICLSPGPGYPADAGNMMALIERTLGQIPLLGICLGYQALIEYHGGKVEPCGPVHGTTDNMILTDAGVQSPVFAGLATDVEPDHPEIPGRKVPIGRYHSLGCVVAPDGIESLGTCSSEIGDVIMAARTTDGKAIGLQFHPESVLSPTGPVILSRCVEQLLAN.

Residues 3–208 (HVVLIDNHDS…SRCVEQLLAN (206 aa)) form the Glutamine amidotransferase type-1 domain. Position 53-55 (53-55 (GPG)) interacts with L-glutamine. Catalysis depends on Cys-80, which acts as the Nucleophile; for GATase activity. L-glutamine is bound by residues Gln-84 and 145–146 (SL). Residues His-185 and Glu-187 each act as for GATase activity in the active site.

In terms of assembly, heterotetramer consisting of two non-identical subunits: a beta subunit (TrpG) and a large alpha subunit (TrpE).

It catalyses the reaction chorismate + L-glutamine = anthranilate + pyruvate + L-glutamate + H(+). It participates in amino-acid biosynthesis; L-tryptophan biosynthesis; L-tryptophan from chorismate: step 1/5. In terms of biological role, part of a heterotetrameric complex that catalyzes the two-step biosynthesis of anthranilate, an intermediate in the biosynthesis of L-tryptophan. In the first step, the glutamine-binding beta subunit (TrpG) of anthranilate synthase (AS) provides the glutamine amidotransferase activity which generates ammonia as a substrate that, along with chorismate, is used in the second step, catalyzed by the large alpha subunit of AS (TrpE) to produce anthranilate. In the absence of TrpG, TrpE can synthesize anthranilate directly from chorismate and high concentrations of ammonia. The polypeptide is Anthranilate synthase component 2 (trpG) (Corynebacterium glutamicum (strain ATCC 13032 / DSM 20300 / JCM 1318 / BCRC 11384 / CCUG 27702 / LMG 3730 / NBRC 12168 / NCIMB 10025 / NRRL B-2784 / 534)).